The primary structure comprises 365 residues: MVQPVFDAAVLSGRADIPSQFIWPEGESPTPDAAEELHVPLIDIGGMLSGDPRATAEVTRLVGEACERHGFFQVVNHGIDAELLADAHRCVDAFFTMPLPEKQRALRRPGESCGYASSFTGRFASKLPWKETLSFRSCPSDPALVVDYIVATLGEDHRRLGEVYARYCSEMSRLSLEIMEVLGESLGVGRAHYRRFFEGNDSIMRLNYYPPCQRPMETLGTGPHCDPTSLTILHQDNVGGLQVHTEGRWRSIRPRADAFVVNIGDTFMALSNGRYKSCLHRAVVNSKVPRKSLAFFLCPEMDKVVAPPGTLVDAANPRAYPDFTWRSLLDFTQKHYRADMKTLEVFSSWIVQQQQGQLLPPLASH.

The Fe2OG dioxygenase domain maps to 199 to 299 (GNDSIMRLNY…RKSLAFFLCP (101 aa)). Positions 224, 226, and 280 each coordinate Fe cation. Arg-290 is an active-site residue.

The protein belongs to the iron/ascorbate-dependent oxidoreductase family. GA20OX subfamily. Fe cation serves as cofactor. L-ascorbate is required as a cofactor. In terms of tissue distribution, not detected in nodes and the ear of the elongating stem.

The catalysed reaction is gibberellin A12 + 2 2-oxoglutarate + 3 O2 + H(+) = gibberellin A9 + 2 succinate + 3 CO2 + 2 H2O. It catalyses the reaction gibberellin A53 + 2 2-oxoglutarate + 3 O2 + H(+) = gibberellin A20 + 2 succinate + 3 CO2 + 2 H2O. In terms of biological role, key oxidase enzyme in the biosynthesis of gibberellin that catalyzes the conversion of GA12 and GA53 to GA9 and GA20 respectively, via a three-step oxidation at C-20 of the GA skeleton. In Triticum aestivum (Wheat), this protein is Gibberellin 20 oxidase 1-B (GA20ox1B).